We begin with the raw amino-acid sequence, 1120 residues long: Prophage side tail fiber protein homolog StfR (1120 aa).

Disordered stretches follow at residues 129 to 154 (KSAS…SARA), 221 to 442 (SAST…ATRA), and 960 to 1021 (SGRA…AGAH). Low complexity-rich tracts occupy residues 221–239 (SAST…ARDA), 248–395 (SSET…SASA), and 402–442 (RQAS…ATRA). A compositionally biased stretch (polar residues) spans 985–1021 (DLGTKTTSSFDYGTKSTNNTGAHTHSVSGSTNSAGAH).

The protein belongs to the tail fiber family.

In Escherichia coli (strain K12), this protein is Prophage side tail fiber protein homolog StfR (stfR).